Consider the following 317-residue polypeptide: Hps1-dma1 cluster cytochrome P450 monooxygenase cyp3.1 (317 aa).

The interval 183–205 (PAIETDRKTSSHSRSPTALADKQ) is disordered. Cys-260 contacts heme.

This sequence belongs to the cytochrome P450 family. Heme is required as a cofactor.

It functions in the pathway secondary metabolite biosynthesis. Its function is as follows. Cytochrome P450 monooxygenase; part of the hps1-dma1 gene cluster that probably mediates the biosynthesis a derivative of cyclopiazonic acid (CPA). The hybrid polyketide synthase-nonribosomal peptide synthetase (PKS-NRPS) nps1 might incorporates acetyl-CoA, malonyl-CoA, and tryptophan (Trp) and utilizes a C-terminal redox-incompetent reductase domain to make and release the tryptophan tetramic acid, cyclo-acetoacetyl-L-tryptophan (c-AATrp), as the first intermediate in the pathway. In addition, the cluster also includes the tryptophan dimethylallyltransferase dma1, the FAD-dependent oxidoreductase toxD, the cytochrome P450 monooxygenase cyp3.1 and the methyltransferase DOTSEDRAFT_139328; the latter 2 being not present in all CPA-producing fungi but involved in additional modifications that occur in biosynthesis the of a range of CPA and CPA-like products. Further studies are required to clarify whether the CPA-like hps1-dma1 cluster is functional or a non-functional relic reflecting evolution of D.septosporum. The chain is Hps1-dma1 cluster cytochrome P450 monooxygenase cyp3.1 (cyp3.1) from Dothistroma septosporum (strain NZE10 / CBS 128990) (Red band needle blight fungus).